The sequence spans 120 residues: Large ribosomal subunit protein bL19 (120 aa).

Belongs to the bacterial ribosomal protein bL19 family.

Its function is as follows. This protein is located at the 30S-50S ribosomal subunit interface and may play a role in the structure and function of the aminoacyl-tRNA binding site. The chain is Large ribosomal subunit protein bL19 from Synechococcus sp. (strain ATCC 27144 / PCC 6301 / SAUG 1402/1) (Anacystis nidulans).